The sequence spans 541 residues: Formimidoyltransferase-cyclodeaminase (541 aa).

Residues 1–181 (MSQLVECVPN…GATVTGARKF (181 aa)) are formiminotransferase N-subdomain. Catalysis depends on His-82, which acts as the For formimidoyltransferase activity. Residue 163-172 (GPSSFVPSWG) coordinates folate. The interval 182–326 (LIAFNINLLS…PKERIIEYLV (145 aa)) is formiminotransferase C-subdomain. The segment at 327-334 (PDSGPEQS) is linker. Positions 335–541 (LLDTSLRGFV…VLGSLEARKE (207 aa)) are cyclodeaminase/cyclohydrolase. The For cyclodeaminase activity role is filled by Asp-412. Ser-520 is subject to Phosphoserine.

In the C-terminal section; belongs to the cyclodeaminase/cyclohydrolase family. It in the N-terminal section; belongs to the formiminotransferase family. Homooctamer, including four polyglutamate binding sites. The subunits are arranged as a tetramer of dimers, and form a planar ring-shaped structure.

It localises to the cytoplasm. Its subcellular location is the cytoskeleton. The protein localises to the microtubule organizing center. The protein resides in the centrosome. It is found in the centriole. It localises to the golgi apparatus. It catalyses the reaction 5-formimidoyltetrahydrofolate + L-glutamate = N-formimidoyl-L-glutamate + (6S)-5,6,7,8-tetrahydrofolate. The enzyme catalyses (6S)-5-formyl-5,6,7,8-tetrahydrofolate + L-glutamate = N-formyl-L-glutamate + (6S)-5,6,7,8-tetrahydrofolate + H(+). The catalysed reaction is 5-formimidoyltetrahydrofolate + 2 H(+) = (6R)-5,10-methenyltetrahydrofolate + NH4(+). Its pathway is amino-acid degradation; L-histidine degradation into L-glutamate; L-glutamate from N-formimidoyl-L-glutamate (transferase route): step 1/1. It participates in one-carbon metabolism; tetrahydrofolate interconversion. Its function is as follows. Folate-dependent enzyme, that displays both transferase and deaminase activity. Serves to channel one-carbon units from formiminoglutamate to the folate pool. Binds and promotes bundling of vimentin filaments originating from the Golgi. In Mus musculus (Mouse), this protein is Formimidoyltransferase-cyclodeaminase (Ftcd).